A 341-amino-acid chain; its full sequence is Holliday junction branch migration complex subunit RuvB (341 aa).

Positions 1–180 (MAKSHTLNPE…FGIQLRLDYY (180 aa)) are large ATPase domain (RuvB-L). 9 residues coordinate ATP: L19, R20, G61, K64, T65, T66, R170, Y180, and R217. Mg(2+) is bound at residue T65. Positions 181–251 (NDEEMKEIVL…LCLKAFEKMG (71 aa)) are small ATPAse domain (RuvB-S). The tract at residues 254–341 (DLGLDGMDRQ…ENHGQDPTLF (88 aa)) is head domain (RuvB-H). Positions 309 and 314 each coordinate DNA.

The protein belongs to the RuvB family. Homohexamer. Forms an RuvA(8)-RuvB(12)-Holliday junction (HJ) complex. HJ DNA is sandwiched between 2 RuvA tetramers; dsDNA enters through RuvA and exits via RuvB. An RuvB hexamer assembles on each DNA strand where it exits the tetramer. Each RuvB hexamer is contacted by two RuvA subunits (via domain III) on 2 adjacent RuvB subunits; this complex drives branch migration. In the full resolvosome a probable DNA-RuvA(4)-RuvB(12)-RuvC(2) complex forms which resolves the HJ.

It localises to the cytoplasm. It catalyses the reaction ATP + H2O = ADP + phosphate + H(+). Functionally, the RuvA-RuvB-RuvC complex processes Holliday junction (HJ) DNA during genetic recombination and DNA repair, while the RuvA-RuvB complex plays an important role in the rescue of blocked DNA replication forks via replication fork reversal (RFR). RuvA specifically binds to HJ cruciform DNA, conferring on it an open structure. The RuvB hexamer acts as an ATP-dependent pump, pulling dsDNA into and through the RuvAB complex. RuvB forms 2 homohexamers on either side of HJ DNA bound by 1 or 2 RuvA tetramers; 4 subunits per hexamer contact DNA at a time. Coordinated motions by a converter formed by DNA-disengaged RuvB subunits stimulates ATP hydrolysis and nucleotide exchange. Immobilization of the converter enables RuvB to convert the ATP-contained energy into a lever motion, pulling 2 nucleotides of DNA out of the RuvA tetramer per ATP hydrolyzed, thus driving DNA branch migration. The RuvB motors rotate together with the DNA substrate, which together with the progressing nucleotide cycle form the mechanistic basis for DNA recombination by continuous HJ branch migration. Branch migration allows RuvC to scan DNA until it finds its consensus sequence, where it cleaves and resolves cruciform DNA. The sequence is that of Holliday junction branch migration complex subunit RuvB from Leptospira borgpetersenii serovar Hardjo-bovis (strain JB197).